We begin with the raw amino-acid sequence, 127 residues long: MYPHLTGLGIHDPKQIERYSLRQEAHKDVLKIYFHKQKGEFFAKSVKFKYPRQVKSVLVDSGSHKYKEVTEINRNLTLVIDELNKITKPAKTTEVDVKEKILSDLRHLEKVVSSKIAEIEADLEKLK.

It belongs to the UPF0325 family.

This Vibrio campbellii (strain ATCC BAA-1116) protein is UPF0325 protein VIBHAR_03240.